Consider the following 181-residue polypeptide: D-lyxose/D-mannose isomerase (181 aa).

The Mn(2+) site is built by His75, His77, Glu88, and His143.

The protein belongs to the D-lyxose ketol-isomerase family. In terms of assembly, homodimer. It depends on Mn(2+) as a cofactor.

It catalyses the reaction D-lyxose = D-xylulose. The enzyme catalyses D-mannose = D-fructose. In terms of biological role, sugar isomerase that catalyzes the reversible isomerization of D-lyxose to D-xylulose, and D-mannose to D-fructose. Shows optimum activity using D-lyxose as substrate, but can also effectively catalyze the isomerization between D-fructose and D-mannose. This is D-lyxose/D-mannose isomerase from Thermosediminibacter oceani (strain ATCC BAA-1034 / DSM 16646 / JW/IW-1228P).